Consider the following 733-residue polypeptide: Phosphoribosylformylglycinamidine synthase subunit PurL (733 aa).

Residue H42 is part of the active site. 2 residues coordinate ATP: Y45 and K84. Mg(2+) is bound at residue E86. Residues 87-90 (SHNH) and R109 contribute to the substrate site. H88 acts as the Proton acceptor in catalysis. Residue D110 coordinates Mg(2+). Q233 is a substrate binding site. Residue D261 coordinates Mg(2+). 305 to 307 (ESQ) lines the substrate pocket. ATP contacts are provided by D489 and G526. Mg(2+) is bound at residue N527. S529 is a binding site for substrate.

It belongs to the FGAMS family. In terms of assembly, monomer. Part of the FGAM synthase complex composed of 1 PurL, 1 PurQ and 2 PurS subunits.

The protein resides in the cytoplasm. The catalysed reaction is N(2)-formyl-N(1)-(5-phospho-beta-D-ribosyl)glycinamide + L-glutamine + ATP + H2O = 2-formamido-N(1)-(5-O-phospho-beta-D-ribosyl)acetamidine + L-glutamate + ADP + phosphate + H(+). Its pathway is purine metabolism; IMP biosynthesis via de novo pathway; 5-amino-1-(5-phospho-D-ribosyl)imidazole from N(2)-formyl-N(1)-(5-phospho-D-ribosyl)glycinamide: step 1/2. Its function is as follows. Part of the phosphoribosylformylglycinamidine synthase complex involved in the purines biosynthetic pathway. Catalyzes the ATP-dependent conversion of formylglycinamide ribonucleotide (FGAR) and glutamine to yield formylglycinamidine ribonucleotide (FGAM) and glutamate. The FGAM synthase complex is composed of three subunits. PurQ produces an ammonia molecule by converting glutamine to glutamate. PurL transfers the ammonia molecule to FGAR to form FGAM in an ATP-dependent manner. PurS interacts with PurQ and PurL and is thought to assist in the transfer of the ammonia molecule from PurQ to PurL. The chain is Phosphoribosylformylglycinamidine synthase subunit PurL from Moorella thermoacetica (strain ATCC 39073 / JCM 9320).